A 1142-amino-acid chain; its full sequence is Auxin response factor 5 (1142 aa).

The segment at residues 148–250 (FCKTLTASDT…QLLLGIRRAN (103 aa)) is a DNA-binding region (TF-B3). The 85-residue stretch at 1009-1093 (RTFTKVYKRG…RCIRILSPQE (85 aa)) folds into the PB1 domain. The disordered stretch occupies residues 1114 to 1142 (SSSDGVNGWRPRCDQNPGNPSIGPYDQFE).

Belongs to the ARF family. As to quaternary structure, homodimers and heterodimers. In terms of tissue distribution, expressed in roots, culms, leaves and young panicles.

The protein localises to the nucleus. Auxin response factors (ARFs) are transcriptional factors that bind specifically to the DNA sequence 5'-TGTCTC-3' found in the auxin-responsive promoter elements (AuxREs). The protein is Auxin response factor 5 (ARF5) of Oryza sativa subsp. japonica (Rice).